The sequence spans 250 residues: Tetrathionate reductase subunit B (250 aa).

A signal peptide (tat-type signal) is located at residues 1–33 (MWTGVNMDSSKRQFLQQLGVLTAGASLVPLAEA). 3 4Fe-4S ferredoxin-type domains span residues 50–79 (YAMLIDLRRCIGCQSCTVSCTIENQTPQGA), 97–128 (VTNVLLPRLCNHCDNPPCVPVCPVQATFQRED), and 129–158 (GIVVVDNKRCVGCAYCVQACPYDARFINHE). 16 residues coordinate [4Fe-4S] cluster: Cys-59, Cys-62, Cys-65, Cys-69, Cys-106, Cys-109, Cys-114, Cys-118, Cys-138, Cys-141, Cys-144, Cys-148, Cys-165, Cys-168, Cys-180, and Cys-184.

In terms of assembly, probably composed of three subunits: TtrA, TtrB and TtrC. Post-translationally, predicted to be exported by the Tat system. The position of the signal peptide cleavage has not been experimentally proven.

The protein localises to the periplasm. The protein resides in the cell inner membrane. Part of a membrane-bound tetrathionate reductase that catalyzes the reduction of tetrathionate to thiosulfate. TtrB is probably involved in transfer of electrons from TtrC to TtrA. During mice infection, the ability to use tetrathionate as an electron acceptor is a growth advantage for S.typhimurium over the competing microbiota in the lumen of the inflamed gut. The polypeptide is Tetrathionate reductase subunit B (ttrB) (Salmonella typhimurium (strain LT2 / SGSC1412 / ATCC 700720)).